Reading from the N-terminus, the 867-residue chain is Leucine--tRNA ligase (867 aa).

The short motif at 40-51 (PYPSGAGLHVGH) is the 'HIGH' region element. Residues 638–642 (KMSKS) carry the 'KMSKS' region motif. Lysine 641 serves as a coordination point for ATP.

Belongs to the class-I aminoacyl-tRNA synthetase family.

The protein localises to the cytoplasm. The enzyme catalyses tRNA(Leu) + L-leucine + ATP = L-leucyl-tRNA(Leu) + AMP + diphosphate. This is Leucine--tRNA ligase from Leptospira biflexa serovar Patoc (strain Patoc 1 / Ames).